A 291-amino-acid polypeptide reads, in one-letter code: Porphobilinogen deaminase (291 aa).

The residue at position 237 (C237) is an S-(dipyrrolylmethanemethyl)cysteine.

Belongs to the HMBS family. In terms of assembly, monomer. Dipyrromethane serves as cofactor.

The catalysed reaction is 4 porphobilinogen + H2O = hydroxymethylbilane + 4 NH4(+). Its pathway is porphyrin-containing compound metabolism; protoporphyrin-IX biosynthesis; coproporphyrinogen-III from 5-aminolevulinate: step 2/4. Its function is as follows. Tetrapolymerization of the monopyrrole PBG into the hydroxymethylbilane pre-uroporphyrinogen in several discrete steps. The chain is Porphobilinogen deaminase from Clostridium perfringens (strain SM101 / Type A).